The sequence spans 156 residues: RNA pyrophosphohydrolase (156 aa).

Positions 6–148 constitute a Nudix hydrolase domain; it reads NYRPNVAAIV…KKNIYVKVIK (143 aa). The Nudix box signature appears at 43–64; sequence GGIDKGESAKNALFRELKEEIG.

This sequence belongs to the Nudix hydrolase family. RppH subfamily. Requires a divalent metal cation as cofactor.

Accelerates the degradation of transcripts by removing pyrophosphate from the 5'-end of triphosphorylated RNA, leading to a more labile monophosphorylated state that can stimulate subsequent ribonuclease cleavage. The polypeptide is RNA pyrophosphohydrolase (Campylobacter jejuni subsp. doylei (strain ATCC BAA-1458 / RM4099 / 269.97)).